Here is a 395-residue protein sequence, read N- to C-terminus: Flap endonuclease 1 (395 aa).

Residues 1–104 (MGIKHLFQVI…GELAKRTARK (104 aa)) are N-domain. Residue Asp34 coordinates Mg(2+). DNA is bound by residues Arg47 and Arg70. Asp86 contributes to the Mg(2+) binding site. The interval 102-121 (ARKAEATEAHEEAKETGTAE) is disordered. Residues 122 to 253 (DVEKFSRRTV…NTALKLIREH (132 aa)) form an I-domain region. Positions 158, 160, 179, and 181 each coordinate Mg(2+). Glu158 serves as a coordination point for DNA. Residues Gly231 and Asp233 each contribute to the DNA site. Residue Asp233 coordinates Mg(2+). The segment at 341–349 (QQSRLEGFF) is interaction with PCNA. A disordered region spans residues 348-395 (FFKPVARTDEEKASLKRKHDEKLQEQKKRKKEEAKAKKEAKAKPRGAA). Residues 353 to 389 (ARTDEEKASLKRKHDEKLQEQKKRKKEEAKAKKEAKA) show a composition bias toward basic and acidic residues.

This sequence belongs to the XPG/RAD2 endonuclease family. FEN1 subfamily. In terms of assembly, interacts with PCNA. Three molecules of fen1 bind to one PCNA trimer with each molecule binding to one PCNA monomer. PCNA stimulates the nuclease activity without altering cleavage specificity. The cofactor is Mg(2+). Phosphorylated. Phosphorylation upon DNA damage induces relocalization to the nuclear plasma.

It is found in the nucleus. The protein resides in the nucleolus. It localises to the nucleoplasm. Its subcellular location is the mitochondrion. Functionally, structure-specific nuclease with 5'-flap endonuclease and 5'-3' exonuclease activities involved in DNA replication and repair. During DNA replication, cleaves the 5'-overhanging flap structure that is generated by displacement synthesis when DNA polymerase encounters the 5'-end of a downstream Okazaki fragment. It enters the flap from the 5'-end and then tracks to cleave the flap base, leaving a nick for ligation. Also involved in the long patch base excision repair (LP-BER) pathway, by cleaving within the apurinic/apyrimidinic (AP) site-terminated flap. Acts as a genome stabilization factor that prevents flaps from equilibrating into structures that lead to duplications and deletions. Also possesses 5'-3' exonuclease activity on nicked or gapped double-stranded DNA, and exhibits RNase H activity. Also involved in replication and repair of rDNA and in repairing mitochondrial DNA. The chain is Flap endonuclease 1 (fen1) from Aspergillus fumigatus (strain CBS 144.89 / FGSC A1163 / CEA10) (Neosartorya fumigata).